A 402-amino-acid polypeptide reads, in one-letter code: Dual-specificity RNA methyltransferase RlmN (402 aa).

The active-site Proton acceptor is E124. Residues 130–370 enclose the Radical SAM core domain; it reads DADRGTLCVS…APVRTPRGRD (241 aa). An intrachain disulfide couples C137 to C375. Positions 144, 148, and 151 each coordinate [4Fe-4S] cluster. Residues 199–200, S231, 253–255, and N332 contribute to the S-adenosyl-L-methionine site; these read GE and SLH. C375 functions as the S-methylcysteine intermediate in the catalytic mechanism.

This sequence belongs to the radical SAM superfamily. RlmN family. The cofactor is [4Fe-4S] cluster.

The protein resides in the cytoplasm. It catalyses the reaction adenosine(2503) in 23S rRNA + 2 reduced [2Fe-2S]-[ferredoxin] + 2 S-adenosyl-L-methionine = 2-methyladenosine(2503) in 23S rRNA + 5'-deoxyadenosine + L-methionine + 2 oxidized [2Fe-2S]-[ferredoxin] + S-adenosyl-L-homocysteine. The enzyme catalyses adenosine(37) in tRNA + 2 reduced [2Fe-2S]-[ferredoxin] + 2 S-adenosyl-L-methionine = 2-methyladenosine(37) in tRNA + 5'-deoxyadenosine + L-methionine + 2 oxidized [2Fe-2S]-[ferredoxin] + S-adenosyl-L-homocysteine. In terms of biological role, specifically methylates position 2 of adenine 2503 in 23S rRNA and position 2 of adenine 37 in tRNAs. m2A2503 modification seems to play a crucial role in the proofreading step occurring at the peptidyl transferase center and thus would serve to optimize ribosomal fidelity. The sequence is that of Dual-specificity RNA methyltransferase RlmN from Rhizorhabdus wittichii (strain DSM 6014 / CCUG 31198 / JCM 15750 / NBRC 105917 / EY 4224 / RW1) (Sphingomonas wittichii).